We begin with the raw amino-acid sequence, 115 residues long: Rubredoxin (115 aa).

A Rubredoxin-like domain is found at Ser-15 to Thr-66. Cys-20, Cys-23, Cys-53, and Cys-56 together coordinate Fe cation.

The protein belongs to the rubredoxin family. Fe(3+) serves as cofactor.

In terms of biological role, rubredoxin is a small nonheme, iron protein lacking acid-labile sulfide. Its single Fe, chelated to 4 Cys, functions as an electron acceptor and may also stabilize the conformation of the molecule. Could be involved in hydrogenase-linked redox processes. The polypeptide is Rubredoxin (rub) (Synechocystis sp. (strain ATCC 27184 / PCC 6803 / Kazusa)).